Consider the following 156-residue polypeptide: Rhombotin-1 (156 aa).

LIM zinc-binding domains lie at 22–84 (KGCA…LFGT) and 86–148 (GNCA…GQLN).

As to expression, expressed in the brain and not in the thymus.

It localises to the nucleus. Functionally, may be involved in gene regulation within neural lineage cells potentially by direct DNA binding or by binding to other transcription factors. The sequence is that of Rhombotin-1 (LMO1) from Bos taurus (Bovine).